The primary structure comprises 805 residues: Shutoff protein (805 aa).

The interval Met-1–Gly-88 is disordered. The span at Thr-18–Thr-29 shows a compositional bias: polar residues. 2 stretches are compositionally biased toward basic and acidic residues: residues Arg-59 to Gln-70 and Gln-79 to Gly-88. The interval Val-280–Cys-345 is binding to host EIF4G. In terms of domain architecture, RRM spans Arg-348–Ser-466. A phosphotyrosine; by host mark is found at Tyr-365 and Tyr-682. Residues Asp-684–Pro-805 form a disordered region. Over residues Gly-726–Gly-742 the composition is skewed to gly residues. A compositionally biased stretch (basic residues) spans Arg-754–Arg-763.

It belongs to the adenoviridae shutoff protein family. As to quaternary structure, monomer. Interacts with hexon protein; this interaction allows chaperoning and trimerization of hexon proteins. Interacts (via N-terminus) with host initiation factor EIF4G (via C-terminus). Interacts (via RRM domain) with viral mRNAs that contain the tripartite leader; this interaction allows ribosome shunting and expression of viral late mRNAs. Post-translationally, might be cleaved by the viral protease. Phosphorylated. Tyrosine phosphorylation enhances preferential binding to tripartite leader mRNAs and allows ribosome shunting. In terms of processing, methylated. Asymmetric dimethylation by host PRMT1 of the Arg/Gly-rich region may regulate shutoff protein binding to hexon and promote the capsid assembly in the nucleus.

The protein localises to the host cytoplasm. In terms of biological role, protein that inhibits host translation while promoting late viral translation by ribosome shunting. Blocks host cap-dependent translation by binding to eIF4G, displacing MKNK1 from cap initiation complexes and preventing EIF4E phosphorylation. Binds to the tripartite leader sequence of viral late mRNAs and recruits host eIF4G, PABPC1/poly-A binding protein and 40S ribosomes subunits on viral mRNAs, allowing ribosome shunting and efficient translation of late viral mRNAs even though conventional translation via ribosome scanning from the cap has been shut off in the host cell. During assembly, acts as a chaperone protein that helps hexon proteins assembly into trimers. This chain is Shutoff protein, found in Homo sapiens (Human).